The primary structure comprises 218 residues: NAD(P)H-quinone oxidoreductase subunit I (218 aa).

4Fe-4S ferredoxin-type domains follow at residues 55-84 (GRIH…VDWV) and 95-124 (RNYS…MTEE). Residues cysteine 64, cysteine 67, cysteine 70, cysteine 74, cysteine 104, cysteine 107, cysteine 110, and cysteine 114 each contribute to the [4Fe-4S] cluster site. The disordered stretch occupies residues 192-218 (LSLQQDSLQGDEGESLQDAPDQDQPKG).

Belongs to the complex I 23 kDa subunit family. NDH-1 is composed of at least 11 different subunits. [4Fe-4S] cluster is required as a cofactor.

It is found in the cellular thylakoid membrane. It carries out the reaction a plastoquinone + NADH + (n+1) H(+)(in) = a plastoquinol + NAD(+) + n H(+)(out). The catalysed reaction is a plastoquinone + NADPH + (n+1) H(+)(in) = a plastoquinol + NADP(+) + n H(+)(out). NDH-1 shuttles electrons from an unknown electron donor, via FMN and iron-sulfur (Fe-S) centers, to quinones in the respiratory and/or the photosynthetic chain. The immediate electron acceptor for the enzyme in this species is believed to be plastoquinone. Couples the redox reaction to proton translocation, and thus conserves the redox energy in a proton gradient. The protein is NAD(P)H-quinone oxidoreductase subunit I of Prochlorococcus marinus (strain MIT 9303).